Reading from the N-terminus, the 699-residue chain is Elongation factor G (699 aa).

The 276-residue stretch at 8–283 folds into the tr-type G domain; sequence EHIRNIGICA…AVVDFLPSPI (276 aa). GTP-binding positions include 17-24, 81-85, and 135-138; these read AHIDAGKT, DTPGH, and NKMD.

Belongs to the TRAFAC class translation factor GTPase superfamily. Classic translation factor GTPase family. EF-G/EF-2 subfamily.

Its subcellular location is the cytoplasm. Functionally, catalyzes the GTP-dependent ribosomal translocation step during translation elongation. During this step, the ribosome changes from the pre-translocational (PRE) to the post-translocational (POST) state as the newly formed A-site-bound peptidyl-tRNA and P-site-bound deacylated tRNA move to the P and E sites, respectively. Catalyzes the coordinated movement of the two tRNA molecules, the mRNA and conformational changes in the ribosome. The polypeptide is Elongation factor G (Rickettsia rickettsii).